The primary structure comprises 144 residues: Tryparedoxin (144 aa).

One can recognise a Thioredoxin domain in the interval 2–144 (SGLAKYLPGA…PDGANFPWPN (143 aa)). Cysteine 40 and cysteine 43 are joined by a disulfide.

It belongs to the thioredoxin family.

Acts as a thiol-disulfide oxidoreductase. It is spontaneously reduced by trypanothione. The protein is Tryparedoxin of Trypanosoma brucei brucei.